Here is a 353-residue protein sequence, read N- to C-terminus: Photosystem II protein D1 (353 aa).

Thr-2 carries the N-acetylthreonine modification. Residue Thr-2 is modified to Phosphothreonine. 3 helical membrane-spanning segments follow: residues 29 to 46, 118 to 133, and 142 to 156; these read YIGWFGVLMIPTLLTATS, HFFLGICSYMGREWEL, and WIAVAYSAPVAAATA. Position 118 (His-118) interacts with chlorophyll a. Tyr-126 contacts pheophytin a. [CaMn4O5] cluster-binding residues include Asp-170 and Glu-189. Residues 197 to 218 traverse the membrane as a helical segment; the sequence is FHMLGVAGVFGGSLFSAMHGSL. Residue His-198 participates in chlorophyll a binding. A quinone-binding positions include His-215 and 264 to 265; that span reads SF. A Fe cation-binding site is contributed by His-215. His-272 is a binding site for Fe cation. A helical membrane pass occupies residues 274–288; sequence FLAAWPVVGIWFTAL. 4 residues coordinate [CaMn4O5] cluster: His-332, Glu-333, Asp-342, and Ala-344. The propeptide occupies 345–353; that stretch reads VVEAPAVNG.

The protein belongs to the reaction center PufL/M/PsbA/D family. In terms of assembly, PSII is composed of 1 copy each of membrane proteins PsbA, PsbB, PsbC, PsbD, PsbE, PsbF, PsbH, PsbI, PsbJ, PsbK, PsbL, PsbM, PsbT, PsbX, PsbY, PsbZ, Psb30/Ycf12, at least 3 peripheral proteins of the oxygen-evolving complex and a large number of cofactors. It forms dimeric complexes. It depends on The D1/D2 heterodimer binds P680, chlorophylls that are the primary electron donor of PSII, and subsequent electron acceptors. It shares a non-heme iron and each subunit binds pheophytin, quinone, additional chlorophylls, carotenoids and lipids. D1 provides most of the ligands for the Mn4-Ca-O5 cluster of the oxygen-evolving complex (OEC). There is also a Cl(-1) ion associated with D1 and D2, which is required for oxygen evolution. The PSII complex binds additional chlorophylls, carotenoids and specific lipids. as a cofactor. In terms of processing, tyr-161 forms a radical intermediate that is referred to as redox-active TyrZ, YZ or Y-Z. Post-translationally, C-terminally processed by CTPA; processing is essential to allow assembly of the oxygen-evolving complex and thus photosynthetic growth.

Its subcellular location is the plastid. The protein resides in the chloroplast thylakoid membrane. It catalyses the reaction 2 a plastoquinone + 4 hnu + 2 H2O = 2 a plastoquinol + O2. Photosystem II (PSII) is a light-driven water:plastoquinone oxidoreductase that uses light energy to abstract electrons from H(2)O, generating O(2) and a proton gradient subsequently used for ATP formation. It consists of a core antenna complex that captures photons, and an electron transfer chain that converts photonic excitation into a charge separation. The D1/D2 (PsbA/PsbD) reaction center heterodimer binds P680, the primary electron donor of PSII as well as several subsequent electron acceptors. The polypeptide is Photosystem II protein D1 (Chlorella vulgaris (Green alga)).